Reading from the N-terminus, the 168-residue chain is UPF0178 protein RBAM_023530 (168 aa).

The protein belongs to the UPF0178 family.

In Bacillus velezensis (strain DSM 23117 / BGSC 10A6 / LMG 26770 / FZB42) (Bacillus amyloliquefaciens subsp. plantarum), this protein is UPF0178 protein RBAM_023530.